A 166-amino-acid chain; its full sequence is MAKRRAAEPLTFRVPWKRLLLSDFPEEPPLWVPPSGAARPLKRQGDAGTMAEPASAPRKRRGGGDDEPELQGRGLEPGEPPPGEQGEPQVSRAAGGGDRVESAGSPQGADEVHSQHNEDFWQYNTFQYWRNPLPPIDLAALEDVSANSLTETLEDKNEGVEIDMES.

The tract at residues 25-116 (PEEPPLWVPP…QGADEVHSQH (92 aa)) is disordered. Ser105 carries the post-translational modification Phosphoserine.

This is an uncharacterized protein from Rattus norvegicus (Rat).